The chain runs to 568 residues: bZIP transcription factor 60 (568 aa).

Composition is skewed to low complexity over residues 1-13 (MAEPDLLAPFADL) and 60-78 (TTSSSSSAAGSPEAGTSSA). Disordered stretches follow at residues 1-29 (MAEPDLLAPFADLPFPPGDDFPDFPTLGD) and 45-134 (DFDV…RKKQ). Residues 1–240 (MAEPDLLAPF…PAKKARKTKK (240 aa)) are Cytoplasmic-facing. Residues 103 to 113 (GGKDGKDDEAK) show a composition bias toward basic and acidic residues. Residues 111–171 (EAKRRARLVR…AENAALKQQL (61 aa)) form the bZIP domain. The segment at 113–144 (KRRARLVRNRESAHQSRQRKKQYVEELEGKVK) is basic motif. Residues 150-157 (IADLTARI) are leucine-zipper. The helical transmembrane segment at 241–261 (VAGVSLLGLLFLMMVCGCLVP) threads the bilayer. Over 262–568 (AVNRMYGAAY…LPFKSHSPHL (307 aa)) the chain is Lumenal. N-linked (GlcNAc...) asparagine glycans are attached at residues Asn-307, Asn-452, Asn-456, Asn-488, and Asn-499. The tract at residues 479–510 (AIPLRGSTSNDTDHFKAPPKNHSQSHAGRKPV) is disordered.

Belongs to the bZIP family.

The protein resides in the endoplasmic reticulum membrane. Its subcellular location is the nucleus. Its function is as follows. Transcription factor involved in endoplasmic reticulum (ER) stress response. Acts as a ER stress sensor and activates the transcription factor BZIP50 and the chaperone BIP1. The sequence is that of bZIP transcription factor 60 from Oryza sativa subsp. japonica (Rice).